A 284-amino-acid chain; its full sequence is NADH-cytochrome b5 reductase 1 (284 aa).

A helical transmembrane segment spans residues Lys-7–Pro-27. An FAD-binding FR-type domain is found at Asn-38–Glu-142. FAD-binding positions include Gly-122–Gly-137 and His-148–Leu-180.

Belongs to the flavoprotein pyridine nucleotide cytochrome reductase family. Monomer. Component of the 2-(3-amino-3-carboxypropyl)histidine synthase complex composed of DPH1, DPH2, KTI11/DPH3 and a NADH-dependent reductase, predominantly CBR1. Interacts with KTI11/DPH3. Interacts with STE20. Requires FAD as cofactor.

Its subcellular location is the mitochondrion outer membrane. The catalysed reaction is 2 Fe(III)-[cytochrome b5] + NADH = 2 Fe(II)-[cytochrome b5] + NAD(+) + H(+). It catalyses the reaction 2 Fe(3+)-[Dph3] + NADH = 2 Fe(2+)-[Dph3] + NAD(+) + H(+). It participates in protein modification; peptidyl-diphthamide biosynthesis. Its activity is regulated as follows. Competitively inhibited by NAD(+). Inhibited by mercurials such as p-chloromercuribenzoate (PCMB) and HgCl(2). Enzymatic activity increases under anaerobic conditions. Its function is as follows. NADH-dependent reductase for KTI11/DPH3 and cytochrome b5. Required for the first step of diphthamide biosynthesis, a post-translational modification of histidine which occurs in elongation factor 2. DPH1 and DPH2 transfer a 3-amino-3-carboxypropyl (ACP) group from S-adenosyl-L-methionine (SAM) to a histidine residue, the reaction is assisted by a reduction system comprising KTI11/DPH3 and a NADH-dependent reductase, predominantly CBR1. By reducing KTI11/DPH3, also involved in the formation of the tRNA wobble base modification mcm5s 2U (5-methoxycarbonylmethyl-2-thiouridine), mediated by the elongator complex. The cytochrome b5/NADH cytochrome b5 reductase electron transfer system supports the catalytic activity of several sterol biosynthetic enzymes. Plays a role in bud morphology. The sequence is that of NADH-cytochrome b5 reductase 1 (CBR1) from Saccharomyces cerevisiae (strain ATCC 204508 / S288c) (Baker's yeast).